The primary structure comprises 183 residues: Der GTPase-activating protein YihI (183 aa).

Residues 1-18 are compositionally biased toward low complexity; that stretch reads MNQPSKAPRAPRSSAATP. Residues 1–114 are disordered; it reads MNQPSKAPRA…EEELAKLEND (114 aa). The span at 25–34 shows a compositional bias: basic and acidic residues; it reads RAELDQEARE. The span at 56-65 shows a compositional bias: low complexity; that stretch reads NQKNKAAAQA. The span at 92 to 114 shows a compositional bias: basic and acidic residues; sequence PKAEAKPKPRLTPEEELAKLEND.

Belongs to the YihI family. Interacts with Der.

Functionally, a GTPase-activating protein (GAP) that modifies Der/EngA GTPase function. May play a role in ribosome biogenesis. This chain is Der GTPase-activating protein YihI, found in Serratia proteamaculans (strain 568).